The sequence spans 252 residues: MKIRALLVAMSVATVLTGCQNMDSNGLLSSGAEAFQAYSLSDAQVKTLSDQACQEMDSKATIAPANSEYAKRLTTIANALGNNINGQPVNYKVYMAKDVNAFAMANGCIRVYSGLMDMMTDNEVEAVIGHEMGHVALGHVKKGMQVALGTNAVRVAAASAGGIVGSLSQSQLGNLGEKLVNSQFSQRQEAEADDYSYDLLRQRGISPAGLATSFEKLAKLEEGRQSSMFDDHPASAERAQHIRDRMSADGIK.

Residues 1 to 18 (MKIRALLVAMSVATVLTG) form the signal peptide. Cys-19 is lipidated: N-palmitoyl cysteine. A lipid anchor (S-diacylglycerol cysteine) is attached at Cys-19. Cys-53 and Cys-108 are oxidised to a cystine. His-130 is a binding site for Zn(2+). The active site involves Glu-131. The Zn(2+) site is built by His-134 and Glu-189. Residues 224–252 (RQSSMFDDHPASAERAQHIRDRMSADGIK) are disordered.

This sequence belongs to the peptidase M48B family. As to quaternary structure, interacts with Era and BepA. Requires Zn(2+) as cofactor. Post-translationally, the intramolecular disulfide bond improves the stability and the activity of LoiP. It forms even in the absence of the oxido-reductase DsbA.

The protein localises to the cell outer membrane. Functionally, metalloprotease that cleaves substrates preferentially between Phe-Phe residues. Plays a role in response to some stress conditions. Seems to regulate the expression of speB. The protein is Metalloprotease LoiP (loiP) of Escherichia coli (strain K12).